A 463-amino-acid chain; its full sequence is Flotillin-like protein 2 (463 aa).

Cysteine 35 carries the S-palmitoyl cysteine lipid modification. Residues 305-354 (EYETKVQEANWELYNKQKQAEAVLYEKQKQAEAQKAEADATFYSKQKEAE) are a coiled coil.

It belongs to the band 7/mec-2 family. Flotillin subfamily. May be palmitoylated.

It is found in the cell membrane. The protein localises to the membrane. It localises to the caveola. May act as a scaffolding protein within caveolar membranes, functionally participating in formation of caveolae or caveolae-like vesicles. In Arabidopsis thaliana (Mouse-ear cress), this protein is Flotillin-like protein 2 (FLOT2).